A 1393-amino-acid chain; its full sequence is DNA glycosylase/AP lyase ROS1 (1393 aa).

3 disordered regions span residues 1–25 (MEKQ…MKPF), 98–186 (SLSS…TSTR), and 237–265 (LSAP…SNLE). Over residues 98–108 (SLSSVSNNVAE) the composition is skewed to low complexity. Residues 117–126 (PKRKKHRPKV) are compositionally biased toward basic residues. 2 stretches are compositionally biased toward basic and acidic residues: residues 127–138 (RREAKPKREPKP) and 162–171 (KKVEVSKDQD). Basic residues predominate over residues 243–256 (PKRKRSQGKRKGVQ). A DEMETER region spans residues 528–626 (KVDLDDETDR…AFMSLASQFP (99 aa)). The segment covering 653–672 (EETMSSPPDHNHSSVTLKNT) has biased composition (polar residues). 2 disordered regions span residues 653–722 (EETM…SVEV) and 789–830 (SNQV…CSQQ). Over residues 687-698 (SRSSSEIAISAH) the composition is skewed to low complexity. Positions 699–722 (ESVDKTTDSKEYVDSDRKGSSVEV) are enriched in basic and acidic residues. Polar residues predominate over residues 816–830 (KSSVDSSEPGCCSQQ). Lys-901 is covalently cross-linked (Glycyl lysine isopeptide (Lys-Gly) (interchain with G-Cter in ubiquitin)). Residues Cys-1038, Cys-1045, Cys-1048, and Cys-1054 each contribute to the [4Fe-4S] cluster site.

This sequence belongs to the DNA glycosylase family. DEMETER subfamily. Interacts (via the central region) with ZDP. Binds to RPA2A. Interacts with XRCC1. Interacts probably with a complex made of MBD7, IDM1, IDM2 and IDM3. Interacts with APE1L. [4Fe-4S] cluster is required as a cofactor. Expressed ubiquitously in both vegetative and reproductive organs.

The protein localises to the nucleus. It is found in the nucleolus. The catalysed reaction is 2'-deoxyribonucleotide-(2'-deoxyribose 5'-phosphate)-2'-deoxyribonucleotide-DNA = a 3'-end 2'-deoxyribonucleotide-(2,3-dehydro-2,3-deoxyribose 5'-phosphate)-DNA + a 5'-end 5'-phospho-2'-deoxyribonucleoside-DNA + H(+). Stimulated by ZDP. Stimulated by XRCC1. In terms of biological role, bifunctional DNA glycosylase/lyase, which excises 5-methylcytosine (5-meC) and 5-hydroxymethylcytosine (5-hmeC), leaving an apyrimidinic (AP) site that is subsequently incised by the lyase activity. Generates 3'-phosphor-alpha,beta-unsaturated aldehyde (3'-PUA) as a primary 5-meC excision intermediate. Prevents DNA hypermethylation, specifically in the promoter of otherwise silenced loci. May be involved in DNA repair through its nicking activity on methylated DNA. Binds with similar affinity to both methylated and non-methylated DNA. Highly distributive behavior on DNA substrates containing multiple 5-meC residues. Involved with Pol IV in the remodeling of the 5S rDNA chromatin via DNA methylation modifications during the first days of development post-germination. Participates in UV-B induced- and oxidative DNA damage repair. The polypeptide is DNA glycosylase/AP lyase ROS1 (Arabidopsis thaliana (Mouse-ear cress)).